We begin with the raw amino-acid sequence, 527 residues long: Peptide chain release factor 3 (527 aa).

The 269-residue stretch at 9 to 277 (AKRRTFAIIS…AVVDWAPKPL (269 aa)) folds into the tr-type G domain. Residues 18–25 (SHPDAGKT), 86–90 (DTPGH), and 140–143 (NKLD) contribute to the GTP site.

Belongs to the TRAFAC class translation factor GTPase superfamily. Classic translation factor GTPase family. PrfC subfamily.

It is found in the cytoplasm. Functionally, increases the formation of ribosomal termination complexes and stimulates activities of RF-1 and RF-2. It binds guanine nucleotides and has strong preference for UGA stop codons. It may interact directly with the ribosome. The stimulation of RF-1 and RF-2 is significantly reduced by GTP and GDP, but not by GMP. This is Peptide chain release factor 3 from Stutzerimonas stutzeri (strain A1501) (Pseudomonas stutzeri).